The sequence spans 272 residues: Phosphoglycolate phosphatase (272 aa).

Residue Asp19 is the Nucleophile of the active site. Mg(2+) contacts are provided by Asp19, Asp21, and Asp182.

Belongs to the HAD-like hydrolase superfamily. CbbY/CbbZ/Gph/YieH family. The cofactor is Mg(2+).

It catalyses the reaction 2-phosphoglycolate + H2O = glycolate + phosphate. The protein operates within organic acid metabolism; glycolate biosynthesis; glycolate from 2-phosphoglycolate: step 1/1. Functionally, specifically catalyzes the dephosphorylation of 2-phosphoglycolate. Is involved in the dissimilation of the intracellular 2-phosphoglycolate formed during the DNA repair of 3'-phosphoglycolate ends, a major class of DNA lesions induced by oxidative stress. This is Phosphoglycolate phosphatase from Pseudomonas putida (strain ATCC 47054 / DSM 6125 / CFBP 8728 / NCIMB 11950 / KT2440).